Here is a 275-residue protein sequence, read N- to C-terminus: Formamidopyrimidine-DNA glycosylase (275 aa).

Pro-2 serves as the catalytic Schiff-base intermediate with DNA. The active-site Proton donor is the Glu-3. Lys-58 functions as the Proton donor; for beta-elimination activity in the catalytic mechanism. DNA is bound by residues His-91, Arg-109, and Arg-154. The segment at 240-274 (AVYERAGLPCRVCGAPIRRLVQGQRATYFCPSCQK) adopts an FPG-type zinc-finger fold. Arg-264 serves as the catalytic Proton donor; for delta-elimination activity.

This sequence belongs to the FPG family. As to quaternary structure, monomer. Requires Zn(2+) as cofactor.

It catalyses the reaction Hydrolysis of DNA containing ring-opened 7-methylguanine residues, releasing 2,6-diamino-4-hydroxy-5-(N-methyl)formamidopyrimidine.. It carries out the reaction 2'-deoxyribonucleotide-(2'-deoxyribose 5'-phosphate)-2'-deoxyribonucleotide-DNA = a 3'-end 2'-deoxyribonucleotide-(2,3-dehydro-2,3-deoxyribose 5'-phosphate)-DNA + a 5'-end 5'-phospho-2'-deoxyribonucleoside-DNA + H(+). Its function is as follows. Involved in base excision repair of DNA damaged by oxidation or by mutagenic agents. Acts as a DNA glycosylase that recognizes and removes damaged bases. Has a preference for oxidized purines, such as 7,8-dihydro-8-oxoguanine (8-oxoG). Has AP (apurinic/apyrimidinic) lyase activity and introduces nicks in the DNA strand. Cleaves the DNA backbone by beta-delta elimination to generate a single-strand break at the site of the removed base with both 3'- and 5'-phosphates. This Bordetella parapertussis (strain 12822 / ATCC BAA-587 / NCTC 13253) protein is Formamidopyrimidine-DNA glycosylase.